Here is a 719-residue protein sequence, read N- to C-terminus: Protein Hook homolog 3 (719 aa).

One can recognise a Calponin-homology (CH) domain in the interval 7-123; sequence VDLCESLLTW…RMLQLILGCA (117 aa). Coiled-coil stretches lie at residues 162–431 and 459–665; these read SIGT…QAQE and EIKE…IVSA. Residues 679 to 719 are disordered; the sequence is EDRLASTGSGQSFLARQRQATSSRRSYPGHVQPATASDVIA. Residues 693–704 are compositionally biased toward low complexity; sequence ARQRQATSSRRS.

The protein belongs to the hook family. As to quaternary structure, interacts with microtubules.

It is found in the cytoplasm. Its subcellular location is the cytoskeleton. It localises to the golgi apparatus. In terms of biological role, acts as an adapter protein linking the dynein motor complex to various cargos and converts dynein from a non-processive to a highly processive motor in the presence of dynactin. Facilitates the interaction between dynein and dynactin and activates dynein processivity (the ability to move along a microtubule for a long distance without falling off the track). Predominantly recruits 2 dyneins, which increases both the force and speed of the microtubule motor. Component of the FTS/Hook/FHIP complex (FHF complex). The FHF complex may function to promote vesicle trafficking and/or fusion via the homotypic vesicular protein sorting complex (the HOPS complex). May regulate clearance of endocytosed receptors such as MSR1. Participates in defining the architecture and localization of the Golgi complex. FHF complex promotes the distribution of AP-4 complex to the perinuclear area of the cell. The chain is Protein Hook homolog 3 (hook3) from Xenopus laevis (African clawed frog).